A 157-amino-acid chain; its full sequence is Class I hydrophobin rodA (157 aa).

The first 41 residues, 1–41, serve as a signal peptide directing secretion; it reads MKFSIAAAVVAFAASVAALPPAHDSQFAGNGVGNKGNSNVK. Asparagine 47 carries N-linked (GlcNAc...) asparagine glycosylation. Cystine bridges form between cysteine 57–cysteine 131, cysteine 65–cysteine 125, cysteine 66–cysteine 106, and cysteine 132–cysteine 150.

Belongs to the fungal hydrophobin family. Self-assembles to form functional amyloid fibrils called rodlets. Self-assembly into fibrillar rodlets occurs spontaneously at hydrophobic:hydrophilic interfaces and the rodlets further associate laterally to form amphipathic monolayers.

It localises to the secreted. The protein resides in the spore wall. Aerial growth, conidiation, and dispersal of filamentous fungi in the environment rely upon a capability of their secreting small amphipathic proteins called hydrophobins (HPBs) with low sequence identity. Class I can self-assemble into an outermost layer of rodlet bundles on aerial cell surfaces, conferring cellular hydrophobicity that supports fungal growth, development and dispersal; whereas Class II form highly ordered films at water-air interfaces through intermolecular interactions but contribute nothing to the rodlet structure. RodA is a class I hydrophobin that contributes to surface hydrophobicity, which is important for processes such as association of hyphae in reproductive structures, dispersal of aerial spores and adhesion of pathogens to host structures. Important for the formation of hydrophobic rodlet layers of asexually-produced spores. Promotes also biofilm formation and may enhance lignocellulose utilization via promoting a compact substrate-enzyme-fungus structure. The polypeptide is Class I hydrophobin rodA (Emericella nidulans (strain FGSC A4 / ATCC 38163 / CBS 112.46 / NRRL 194 / M139) (Aspergillus nidulans)).